A 1704-amino-acid chain; its full sequence is Villidin (1704 aa).

4 WD repeats span residues Gly82–Asp122, Lys133–Ser173, Gly180–Gln221, and Thr225–Pro271. 2 disordered regions span residues Ile439–Phe460 and Ser606–Thr721. Residues Ser442–Gly456 show a composition bias toward gly residues. The PH 1 domain maps to Pro459–Glu563. Composition is skewed to low complexity over residues Gln613–Gln636, Ser651–Ser701, and Asn709–Thr721. PH domains follow at residues Asp727 to Lys828 and Glu871 to Lys969. The interval Leu848–Gln877 is disordered. Positions Ser854–Pro873 are enriched in acidic residues. Gelsolin-like repeat units follow at residues Lys1025–Asn1119, Ile1138–Tyr1241, Gly1293–Lys1390, Lys1404–Thr1494, and Arg1520–Trp1615. In terms of domain architecture, HP spans Asp1641–Phe1704.

It localises to the membrane. It is found in the cytoplasm. The protein resides in the cytoskeleton. Functionally, may function as a linker between membranes and the actin cytoskeleton. The chain is Villidin (vilA) from Dictyostelium discoideum (Social amoeba).